We begin with the raw amino-acid sequence, 1335 residues long: Mediator of RNA polymerase II transcription subunit 15a (1335 aa).

Disordered regions lie at residues 1 to 27 (MDNN…TQLP), 109 to 172 (GTSI…NNNT), 190 to 225 (QDSS…QQQP), 241 to 389 (FQSG…QHQQ), 401 to 448 (IQQQ…TQSN), 496 to 525 (LYSS…QQLG), 567 to 591 (SQRT…ANGG), and 683 to 815 (HRPR…QSNV). Composition is skewed to polar residues over residues 110-158 (TSID…TALP), 190-207 (QDSS…SGPQ), and 241-257 (FQSG…PSHI). Residues 258 to 270 (QQQQQNVLQPNQL) show a composition bias toward low complexity. A compositionally biased stretch (polar residues) spans 271 to 299 (HSSQQPGVPTSATQPSTVNSAPLQGLHTN). A compositionally biased stretch (low complexity) spans 300–314 (QQSSPQLSSQQTTQS). Positions 315 to 328 (MLRQHQSSMLRQHP) are enriched in polar residues. Over residues 329-362 (QSQQASGIHQQQSSLPQQSISPLQQQPTQLMRQQ) the composition is skewed to low complexity. A compositionally biased stretch (polar residues) spans 363–374 (AANSSGIQQKQM). The span at 401–436 (IQQQQSQQQPLQQPQQQQKQQPPAQQQLMSQQNSLQ) shows a compositional bias: low complexity. The segment covering 437–448 (ATHQNPLGTQSN) has biased composition (polar residues). Low complexity predominate over residues 498-525 (SSQGQQSQNQPSQQQMMPQLQSHHQQLG). The span at 567 to 588 (SQRTLPEMPSSSLDSTAQTESA) shows a compositional bias: polar residues. The span at 688 to 712 (PVQQGQLPQSQMQPMQQPQSQTVQD) shows a compositional bias: low complexity. Polar residues-rich tracts occupy residues 716–728 (DNQT…SMSM), 735–749 (AQQS…NVLS), and 756–815 (APQQ…QSNV). Residues 834 to 882 (QDQQMQLKQQFQQRQMQQQQLQARQQQQQQQLQARQQAAQLQQMNDMND) adopt a coiled-coil conformation. Disordered regions lie at residues 947–986 (KMGT…SSSL) and 1146–1165 (FAGS…GKKA). Residues 957-973 (SPFVVPSPSSTPLAPSP) show a composition bias toward low complexity. Residues 1148 to 1160 (GSETSDLESTATS) show a composition bias toward polar residues.

This sequence belongs to the plant Mediator complex subunit 15 family. In terms of assembly, component of the Mediator complex.

Its subcellular location is the nucleus. In terms of biological role, component of the Mediator complex, a coactivator involved in the regulated transcription of nearly all RNA polymerase II-dependent genes. Mediator functions as a bridge to convey information from gene-specific regulatory proteins to the basal RNA polymerase II transcription machinery. The Mediator complex, having a compact conformation in its free form, is recruited to promoters by direct interactions with regulatory proteins and serves for the assembly of a functional preinitiation complex with RNA polymerase II and the general transcription factors. In Arabidopsis thaliana (Mouse-ear cress), this protein is Mediator of RNA polymerase II transcription subunit 15a (MED15A).